The primary structure comprises 434 residues: Glutamate-1-semialdehyde 2,1-aminomutase 2 (434 aa).

N6-(pyridoxal phosphate)lysine is present on Lys269.

Belongs to the class-III pyridoxal-phosphate-dependent aminotransferase family. HemL subfamily. In terms of assembly, homodimer. Pyridoxal 5'-phosphate is required as a cofactor.

It localises to the cytoplasm. The enzyme catalyses (S)-4-amino-5-oxopentanoate = 5-aminolevulinate. Its pathway is porphyrin-containing compound metabolism; protoporphyrin-IX biosynthesis; 5-aminolevulinate from L-glutamyl-tRNA(Glu): step 2/2. This is Glutamate-1-semialdehyde 2,1-aminomutase 2 from Exiguobacterium sp. (strain ATCC BAA-1283 / AT1b).